The chain runs to 745 residues: Gamma-tubulin complex component 4 (745 aa).

Belongs to the TUBGCP family. Gamma-tubulin complex is composed of gamma-tubulin and GCP proteins.

Its subcellular location is the cytoplasm. It localises to the cytoskeleton. It is found in the microtubule organizing center. The protein resides in the spindle. Its function is as follows. Gamma-tubulin complex is necessary for microtubule nucleation at the microtubule organizing centers (MTOCs). In terms of biological role, gamma-tubulin complex is essential for the control of microtubular network remodeling in the course of initiation and development of giant-feeding cells, and for the successful reproduction of nematodes (e.g. Meloidogyne spp.) in their plant hosts. The sequence is that of Gamma-tubulin complex component 4 (GCP4) from Arabidopsis thaliana (Mouse-ear cress).